We begin with the raw amino-acid sequence, 588 residues long: Adenine deaminase (588 aa).

It belongs to the metallo-dependent hydrolases superfamily. Adenine deaminase family. As to quaternary structure, homodimer. The cofactor is Mn(2+).

It carries out the reaction adenine + H2O + H(+) = hypoxanthine + NH4(+). In Escherichia coli (strain K12 / DH10B), this protein is Adenine deaminase.